Here is an 871-residue protein sequence, read N- to C-terminus: Alanine--tRNA ligase (871 aa).

Positions 561, 565, 665, and 669 each coordinate Zn(2+).

This sequence belongs to the class-II aminoacyl-tRNA synthetase family. Zn(2+) is required as a cofactor.

It is found in the cytoplasm. It catalyses the reaction tRNA(Ala) + L-alanine + ATP = L-alanyl-tRNA(Ala) + AMP + diphosphate. Its function is as follows. Catalyzes the attachment of alanine to tRNA(Ala) in a two-step reaction: alanine is first activated by ATP to form Ala-AMP and then transferred to the acceptor end of tRNA(Ala). Also edits incorrectly charged Ser-tRNA(Ala) and Gly-tRNA(Ala) via its editing domain. This chain is Alanine--tRNA ligase, found in Dehalococcoides mccartyi (strain ATCC BAA-2266 / KCTC 15142 / 195) (Dehalococcoides ethenogenes (strain 195)).